The following is a 104-amino-acid chain: uncharacterized protein (104 aa).

This is an uncharacterized protein from Acidithiobacillus ferridurans.